Reading from the N-terminus, the 277-residue chain is uncharacterized protein (277 aa).

Disordered stretches follow at residues 1–103 (PPLR…LEDP) and 254–277 (PSPS…SPPR). The segment covering 48-65 (RRNDTGKDRGTHRQRAET) has biased composition (basic and acidic residues). Positions 66-77 (PSRSPVPTTNTV) are enriched in polar residues. Residues 82–91 (PAVRRQRRTQ) show a composition bias toward basic residues.

This is an uncharacterized protein from Homo sapiens (Human).